The primary structure comprises 223 residues: Glycoprotein 42 (223 aa).

Topologically, residues 1 to 8 (MVSFKQVR) are intravirion. The helical transmembrane segment at 9–29 (VPLFTAIALVIVLLLAYFLPP) threads the bilayer. Topologically, residues 30–223 (RVRGGGRVAA…CLCVSQRSNS (194 aa)) are virion surface. Intrachain disulfides connect cysteine 99–cysteine 138, cysteine 102–cysteine 115, cysteine 128–cysteine 214, cysteine 132–cysteine 216, and cysteine 192–cysteine 208. Residues 111-217 (YKGCCFYFTK…CSFLKPCLCV (107 aa)) form the C-type lectin domain.

Belongs to the epstein barr virus gp42 family. In terms of assembly, forms a complex with gp25 and gp85 via its N-terminus; this complex is used for invasion of B-lymphocytes. Interacts with human HLA-DRA and HLA-DRB1.

The protein resides in the virion membrane. It is found in the host membrane. Plays a role in virion attachment to host B-lymphocytes, through binding to leukocyte antigen (HLA) class II and subsequently participates in fusion of the virion with host membranes. May act as a tropism switch that directs fusion with B-lymphocytes and inhibits fusion with epithelial cells. Additionally, hampers T-cell recognition via HLA class II molecules through steric hindrance of T-cell receptor-class II-peptide interaction. Its function is as follows. Soluble gp42 inhibits HLA class II-restricted antigen presentation to T-cells through binding to immature and mature HLA class II complexes. The protein is Glycoprotein 42 of Epstein-Barr virus (strain B95-8) (HHV-4).